A 1070-amino-acid polypeptide reads, in one-letter code: DNA-directed RNA polymerase subunit beta (1070 aa).

The protein belongs to the RNA polymerase beta chain family. As to quaternary structure, in plastids the minimal PEP RNA polymerase catalytic core is composed of four subunits: alpha, beta, beta', and beta''. When a (nuclear-encoded) sigma factor is associated with the core the holoenzyme is formed, which can initiate transcription.

Its subcellular location is the plastid. The protein localises to the chloroplast. It catalyses the reaction RNA(n) + a ribonucleoside 5'-triphosphate = RNA(n+1) + diphosphate. Functionally, DNA-dependent RNA polymerase catalyzes the transcription of DNA into RNA using the four ribonucleoside triphosphates as substrates. The protein is DNA-directed RNA polymerase subunit beta of Liriodendron tulipifera (Tuliptree).